We begin with the raw amino-acid sequence, 350 residues long: Protein-glutamate methylesterase/protein-glutamine glutaminase (350 aa).

Residues Lys5–Val122 enclose the Response regulatory domain. Position 56 is a 4-aspartylphosphate (Asp56). The CheB-type methylesterase domain occupies Pro152–Arg346. Catalysis depends on residues Ser165, His191, and Asp288.

This sequence belongs to the CheB family. Phosphorylated by CheA. Phosphorylation of the N-terminal regulatory domain activates the methylesterase activity.

The protein resides in the cytoplasm. The enzyme catalyses [protein]-L-glutamate 5-O-methyl ester + H2O = L-glutamyl-[protein] + methanol + H(+). The catalysed reaction is L-glutaminyl-[protein] + H2O = L-glutamyl-[protein] + NH4(+). Functionally, involved in chemotaxis. Part of a chemotaxis signal transduction system that modulates chemotaxis in response to various stimuli. Catalyzes the demethylation of specific methylglutamate residues introduced into the chemoreceptors (methyl-accepting chemotaxis proteins or MCP) by CheR. Also mediates the irreversible deamidation of specific glutamine residues to glutamic acid. This Bordetella pertussis (strain Tohama I / ATCC BAA-589 / NCTC 13251) protein is Protein-glutamate methylesterase/protein-glutamine glutaminase.